A 978-amino-acid polypeptide reads, in one-letter code: Mineralocorticoid receptor (978 aa).

Residues methionine 1–isoleucine 602 form a modulating region. The segment covering serine 234–asparagine 243 has biased composition (polar residues). Disordered regions lie at residues serine 234 to glycine 331 and glycine 353 to valine 372. A phosphoserine mark is found at serine 250, serine 259, serine 283, serine 287, and serine 299. Positions serine 259–proline 300 are enriched in low complexity. A compositionally biased stretch (polar residues) spans alanine 301–glycine 331. 8 residues coordinate Zn(2+): cysteine 603, cysteine 606, cysteine 620, cysteine 623, cysteine 637, cysteine 643, cysteine 653, and cysteine 656. NR C4-type zinc fingers lie at residues cysteine 603–cysteine 623 and cysteine 637–cysteine 661. The segment at residues cysteine 603 to methionine 666 is a DNA-binding region (nuclear receptor). The hinge stretch occupies residues asparagine 667–proline 719. The segment at glycine 681–alanine 706 is disordered. Residues glutamine 688 to serine 697 are compositionally biased toward pro residues. The NR LBD domain occupies glutamine 720–isoleucine 958. Residues asparagine 764 and glutamine 770 each contribute to the 21-hydroxyprogesterone site. Aldosterone contacts are provided by asparagine 764 and glutamine 770. Positions 764 and 770 each coordinate progesterone. Residues lysine 776–lysine 779 form an important for coactivator binding region. 21-hydroxyprogesterone contacts are provided by arginine 811 and threonine 939. 2 residues coordinate aldosterone: arginine 811 and threonine 939. Arginine 811 and threonine 939 together coordinate progesterone.

This sequence belongs to the nuclear hormone receptor family. NR3 subfamily. In terms of assembly, heteromultimeric cytoplasmic complex with HSP90, HSP70, and FKBP4, in the absence of ligand. After ligand binding, it translocates to the nucleus and binds to DNA as a homodimer and as a heterodimer with NR3C1. Binds the coactivator NCOA2. May interact with HSD11B2 in the absence of ligand. Binds the coactivators NCOA1, TIF1 and NRIP1. Phosphorylated. Expressed in heart and kidney.

It is found in the cytoplasm. The protein resides in the nucleus. The protein localises to the endoplasmic reticulum membrane. Its function is as follows. Receptor for both mineralocorticoids (MC) such as aldosterone and glucocorticoids (GC) such as corticosterone or cortisol. Binds to mineralocorticoid response elements (MRE) and transactivates target genes. The effect of MC is to increase ion and water transport and thus raise extracellular fluid volume and blood pressure and lower potassium levels. In Mus musculus (Mouse), this protein is Mineralocorticoid receptor (Nr3c2).